The chain runs to 227 residues: Lipoprotein-releasing system ATP-binding protein LolD (227 aa).

The ABC transporter domain maps to 6 to 227; the sequence is LKCENINKFY…MQDGLLKEGA (222 aa). 42 to 49 contacts ATP; that stretch reads GSSGSGKS.

This sequence belongs to the ABC transporter superfamily. Lipoprotein translocase (TC 3.A.1.125) family. In terms of assembly, the complex is composed of two ATP-binding proteins (LolD) and two transmembrane proteins (LolC and LolE).

The protein resides in the cell inner membrane. Its function is as follows. Part of the ABC transporter complex LolCDE involved in the translocation of mature outer membrane-directed lipoproteins, from the inner membrane to the periplasmic chaperone, LolA. Responsible for the formation of the LolA-lipoprotein complex in an ATP-dependent manner. This chain is Lipoprotein-releasing system ATP-binding protein LolD, found in Haemophilus influenzae (strain 86-028NP).